The chain runs to 222 residues: Voltage-dependent calcium channel gamma-1 subunit (222 aa).

Residues 1 to 10 (MSQTKMLKVR) lie on the Cytoplasmic side of the membrane. Residues 11–29 (VTLFCILAGIVLAMTAVVT) form a helical membrane-spanning segment. Topologically, residues 30 to 108 (DHWAVLSPHM…TQKEYSISAA (79 aa)) are extracellular. Residues N43 and N79 are each glycosylated (N-linked (GlcNAc...) asparagine). A disulfide bridge links C57 with C80. Residues 109–129 (AIAIFSLGFIILGSLCVLLSL) form a helical membrane-spanning segment. Residues 130 to 134 (GKKRD) are Cytoplasmic-facing. The chain crosses the membrane as a helical span at residues 135 to 155 (YLLRPASMFYAFAGLCILVSV). The Extracellular portion of the chain corresponds to 156-179 (EVMRQSVKRMIDSEDTVWIEYYYS). The chain crosses the membrane as a helical span at residues 180–204 (WSFACACAAFILLFLGGLALLLFSL). Residues 205-222 (PRMPRNPWESCMDAEPEH) lie on the Cytoplasmic side of the membrane.

The protein belongs to the PMP-22/EMP/MP20 family. CACNG subfamily. In terms of assembly, component of a calcium channel complex consisting of a pore-forming alpha subunit (CACNA1S) and the ancillary subunits CACNB1 or CACNB2, CACNG1 and CACNA2D1. The channel complex contains alpha, beta, gamma and delta subunits in a 1:1:1:1 ratio, i.e. it contains either CACNB1 or CACNB2. N-glycosylated. Skeletal muscle.

The protein resides in the cell membrane. The protein localises to the sarcolemma. Its function is as follows. Regulatory subunit of the voltage-gated calcium channel that gives rise to L-type calcium currents in skeletal muscle. Regulates channel inactivation kinetics. This Homo sapiens (Human) protein is Voltage-dependent calcium channel gamma-1 subunit (CACNG1).